A 91-amino-acid chain; its full sequence is Protein LURE 1.6 (91 aa).

An N-terminal signal peptide occupies residues 1-20; the sequence is MKLPFIFLITLLIFVSSCTS. 3 disulfides stabilise this stretch: Cys-59–Cys-76, Cys-62–Cys-83, and Cys-66–Cys-85.

It belongs to the DEFL family. As to expression, expressed in the pistil. Detected in the synergid cells.

Its subcellular location is the secreted. Its function is as follows. Pollen tube attractants guiding pollen tubes to the ovular micropyle. The polypeptide is Protein LURE 1.6 (Arabidopsis thaliana (Mouse-ear cress)).